Reading from the N-terminus, the 385-residue chain is tRNA (guanine-N(7)-)-methyltransferase non-catalytic subunit wuho (385 aa).

WD repeat units follow at residues 68-108 (KVEV…AKLL), 155-194 (GHLS…DIHS), and 198-236 (GHKE…ELLH).

This sequence belongs to the WD repeat TRM82 family. In terms of assembly, forms a heterodimer with the catalytic subunit Mettl1. Interacts with mei-P26 and weakly interacts with bgcn; required for the function or formation of the mei-P26-bgcn-bam-sxl complex. Interacts with nanos; may be involved in mei-P26-dependent derepression of the BMP signaling pathway. Interacts with Myc; the interaction may be mediated by mei-P26 and may be involved in the regulation of ribosome biogenesis. In terms of tissue distribution, in testis, it is present at high level in hub cells, a niche for germline stem cells of testis. Ubiquitously expressed in all testicular cells throughout spermatogenesis. Ubiquitously expressed in all germline and somatic cells of the ovary.

The protein localises to the nucleus. Its subcellular location is the cytoplasm. Its pathway is tRNA modification; N(7)-methylguanine-tRNA biosynthesis. Its function is as follows. Required for the Mettl1-dependent formation of N(7)-methylguanine at position 46 (m7G46) in tRNA. In the Mettl1-wuho methyltransferase complex, it is required to stabilize and induce conformational changes of the catalytic subunit. Required for binding of nanos mRNA and repression of translation by the mei-P26-bgcn-bam-sxl complex. May cooperate with mei-P26 and nanos to derepress the BMP signaling pathway. May cooperate with mei-P26 to suppress expression of a subset of microRNAs. May cooperate with mei-P26 to regulate bam expression levels in germline cells during gametogenesis. Required to promote mitosis to meiosis transition during gametogenesis. May regulate germline cell division in part by regulating ribosome biogenesis. The protein is tRNA (guanine-N(7)-)-methyltransferase non-catalytic subunit wuho of Drosophila grimshawi (Hawaiian fruit fly).